A 2824-amino-acid chain; its full sequence is Highly reducing polyketide synthase stpks1 (2824 aa).

The Ketosynthase family 3 (KS3) domain occupies 8 to 428 (PKPVAVVGIS…GANGHVIAES (421 aa)). Catalysis depends on for beta-ketoacyl synthase activity residues C177, H312, and H348. The malonyl-CoA:ACP transacylase (MAT) domain stretch occupies residues 517 to 854 (QLVFVFSGQG…LTAVGNLSTL (338 aa)). S616 serves as the catalytic For malonyltransferase activity. The segment at 886–1004 (MPFYSESSEL…GFMTTEVMDK (119 aa)) is N-terminal hotdog fold. Residues 886–1168 (MPFYSESSEL…SKHWTGAVPT (283 aa)) enclose the PKS/mFAS DH domain. A dehydratase (DH) domain region spans residues 894–1083 (ELAVKMKRSR…PSLLDSCIHG (190 aa)). The Proton acceptor; for dehydratase activity role is filled by H925. Residues 1018–1168 (TTPADISNLY…SKHWTGAVPT (151 aa)) are C-terminal hotdog fold. D1078 (proton donor; for dehydratase activity) is an active-site residue. Positions 1101–1449 (PSHIGRVTLY…KFQVVDGAQD (349 aa)) are methyltransferase (CMet) domain. Residues 1213–1232 (APPSANGHANGHANGSANGS) are disordered. The tract at residues 1518-1840 (TGTFDGAVAT…LPSDFSVSQS (323 aa)) is enoyl reductase (ER) domain. Positions 1842-2096 (ALADDKTYLV…SESVLYNHLV (255 aa)) are ketoreductase (KR) domain. The 88-residue stretch at 2109-2196 (DPYEVLQEIV…TAVSTAEKPF (88 aa)) folds into the Carrier domain. The tract at residues 2200-2414 (AMHQPGQTIL…WASSDATTRM (215 aa)) is thioesterase (TE) domain. Positions 2608–2809 (YRQNKVFTSM…ATGYSNVQVC (202 aa)) are methyltransferase (CMet) domain.

It functions in the pathway mycotoxin biosynthesis. Its function is as follows. Highly reducing polyketide synthase; part of the gene cluster that mediates the biosynthesis of strobilurin A, an antifungal polyketide that contains a key beta-methoxyacrylate toxophore that targets the complex III of the mitochondrial electron transport chain. Strobilurin biosynthesis begins with construction of benzoyl CoA by step-wise elimination of ammonia from phenylalanine by the phenylalanine ammonia-lyase str11, oxygenation by str8 and retro-Claisen reaction to form benzoic acid, which is activated to its CoA thiolester benzoyl CoA by the dedicated CoA ligase str10. Benzoyl CoA forms the starter unit for the highly reducing polyketide synthase stpks1 that produces the polyketide prestrobilutin A. The FAD-dependent oxygenase str9 then catalyzes the key oxidative rearrangement responsible for the creation of the beta-methoxyacrylate toxophore. Str9 performs epoxidation of the 2,3 olefin of prestrobilutin A, followed by Meinwald rearrangement to furnish the aldehyde intermediate. Rapid enolization of the aldehyde intermediate would give the beta-methoxyacrylate skeleton and methylations catalyzed by str2 and str3 complete the synthesis and lead to the production of strobilurin A. The short-chain dehydrogenase stl2 and the dehydrogenase str4 play a role in the shunt pathway leading to the production of bolineol. The cluster encodes no obvious halogenase gene that could be involved in production of strobilurin B, nor any obvious dimethylallyl-transferase that could be involved in the production of strobilurin G. It is possible that unknown proteins encoded in, or near, the cluster (such as str1 or stl1) may form new classes of halogenases or dimethylally-transferases, or that the responsible genes are located elsewhere on the genome. Similarly, proteins encoded by str5/str6 hydrolases appear to have no chemical role in the biosynthesis of strobilurin A. Finally, no obvious self-resistance gene is found within the cluster. This chain is Highly reducing polyketide synthase stpks1, found in Strobilurus tenacellus.